Here is a 249-residue protein sequence, read N- to C-terminus: Acetylglutamate kinase (249 aa).

Substrate contacts are provided by residues 38-39 (GG), Arg-60, and Asn-147.

This sequence belongs to the acetylglutamate kinase family. ArgB subfamily.

The protein localises to the cytoplasm. The enzyme catalyses N-acetyl-L-glutamate + ATP = N-acetyl-L-glutamyl 5-phosphate + ADP. It functions in the pathway amino-acid biosynthesis; L-arginine biosynthesis; N(2)-acetyl-L-ornithine from L-glutamate: step 2/4. Catalyzes the ATP-dependent phosphorylation of N-acetyl-L-glutamate. This is Acetylglutamate kinase from Deinococcus radiodurans (strain ATCC 13939 / DSM 20539 / JCM 16871 / CCUG 27074 / LMG 4051 / NBRC 15346 / NCIMB 9279 / VKM B-1422 / R1).